The sequence spans 415 residues: Gamma-glutamyl phosphate reductase (415 aa).

This sequence belongs to the gamma-glutamyl phosphate reductase family.

It localises to the cytoplasm. It carries out the reaction L-glutamate 5-semialdehyde + phosphate + NADP(+) = L-glutamyl 5-phosphate + NADPH + H(+). It participates in amino-acid biosynthesis; L-proline biosynthesis; L-glutamate 5-semialdehyde from L-glutamate: step 2/2. Its function is as follows. Catalyzes the NADPH-dependent reduction of L-glutamate 5-phosphate into L-glutamate 5-semialdehyde and phosphate. The product spontaneously undergoes cyclization to form 1-pyrroline-5-carboxylate. This chain is Gamma-glutamyl phosphate reductase, found in Thermotoga sp. (strain RQ2).